The sequence spans 324 residues: MKRTIAIVAGGDSSELVVSLRSAQGLYSFIDKERYNLYIVEMEGHRWEVVLPDGSKTPIDRNDFSFMENGEKKQFDFAYITIHGTPGENGILQGYFDLLGIPYSSCNVLVSAMTFNKFTCNQYLKGFGIRVAESLILRKGFEITDEEVINKIGLPCFIKPNAGGSSFGVTKVKTKEDIQPAIEKAFEESDEVMIEAFMKGTEITCGCYKTSDKEVVFPITEVVSANEFFDYGAKYNGESQEITPARLPEDTAERVRLLTSAIYDILGCSGLIRIDYIITEGEKVNLLEINTTPGMTATSFIPQQVRAAGLDIKDVMTDIIENKF.

The ATP-grasp domain maps to 121–321 (NQYLKGFGIR…IKDVMTDIIE (201 aa)). 149–204 (INKIGLPCFIKPNAGGSSFGVTKVKTKEDIQPAIEKAFEESDEVMIEAFMKGTEIT) lines the ATP pocket. Asp275, Glu288, and Asn290 together coordinate Mg(2+).

It belongs to the D-alanine--D-alanine ligase family. Requires Mg(2+) as cofactor. Mn(2+) is required as a cofactor.

The protein localises to the cytoplasm. The enzyme catalyses 2 D-alanine + ATP = D-alanyl-D-alanine + ADP + phosphate + H(+). Its pathway is cell wall biogenesis; peptidoglycan biosynthesis. Cell wall formation. The chain is D-alanine--D-alanine ligase from Phocaeicola vulgatus (strain ATCC 8482 / DSM 1447 / JCM 5826 / CCUG 4940 / NBRC 14291 / NCTC 11154) (Bacteroides vulgatus).